We begin with the raw amino-acid sequence, 205 residues long: Small ribosomal subunit protein uS4 (205 aa).

A compositionally biased stretch (basic and acidic residues) spans 1 to 16 (MSKRETTKYKIDRRMG). Positions 1-46 (MSKRETTKYKIDRRMGENIWGRPKSPVNRRDYGPGQHGQRRKGKLS) are disordered. The S4 RNA-binding domain maps to 94 to 157 (SRLDAVVYRA…KQLVLVLESV (64 aa)).

Belongs to the universal ribosomal protein uS4 family. As to quaternary structure, part of the 30S ribosomal subunit. Contacts protein S5. The interaction surface between S4 and S5 is involved in control of translational fidelity.

One of the primary rRNA binding proteins, it binds directly to 16S rRNA where it nucleates assembly of the body of the 30S subunit. In terms of biological role, with S5 and S12 plays an important role in translational accuracy. The chain is Small ribosomal subunit protein uS4 from Bartonella tribocorum (strain CIP 105476 / IBS 506).